A 156-amino-acid polypeptide reads, in one-letter code: Small ribosomal subunit protein uS15 (156 aa).

The interval 1–67 (MARMHTRRRG…GVQGTPIPDV (67 aa)) is disordered. Basic and acidic residues predominate over residues 10-19 (GSSDSDKPAA). Residues 21–32 (EPPEWSDVDEDA) are compositionally biased toward acidic residues.

The protein belongs to the universal ribosomal protein uS15 family. As to quaternary structure, part of the 30S ribosomal subunit.

This chain is Small ribosomal subunit protein uS15, found in Haloarcula marismortui (strain ATCC 43049 / DSM 3752 / JCM 8966 / VKM B-1809) (Halobacterium marismortui).